Here is a 441-residue protein sequence, read N- to C-terminus: ATP-dependent protease ATPase subunit HslU (441 aa).

ATP contacts are provided by residues Ile17, 60 to 65 (GVGKTE), Asp253, Glu319, and Arg391.

This sequence belongs to the ClpX chaperone family. HslU subfamily. As to quaternary structure, a double ring-shaped homohexamer of HslV is capped on each side by a ring-shaped HslU homohexamer. The assembly of the HslU/HslV complex is dependent on binding of ATP.

Its subcellular location is the cytoplasm. ATPase subunit of a proteasome-like degradation complex; this subunit has chaperone activity. The binding of ATP and its subsequent hydrolysis by HslU are essential for unfolding of protein substrates subsequently hydrolyzed by HslV. HslU recognizes the N-terminal part of its protein substrates and unfolds these before they are guided to HslV for hydrolysis. The protein is ATP-dependent protease ATPase subunit HslU of Legionella pneumophila (strain Paris).